The following is a 198-amino-acid chain: TATA-box-binding protein (198 aa).

2 consecutive repeat copies span residues 14 to 90 (IENI…IKTL) and 105 to 181 (IQNI…FDKL).

It belongs to the TBP family.

In terms of biological role, general factor that plays a role in the activation of archaeal genes transcribed by RNA polymerase. Binds specifically to the TATA box promoter element which lies close to the position of transcription initiation. The sequence is that of TATA-box-binding protein from Saccharolobus shibatae (strain ATCC 51178 / DSM 5389 / JCM 8931 / NBRC 15437 / B12) (Sulfolobus shibatae).